Reading from the N-terminus, the 89-residue chain is Small ribosomal subunit protein uS14 (89 aa).

The protein belongs to the universal ribosomal protein uS14 family. Part of the 30S ribosomal subunit. Contacts proteins S3 and S10.

Functionally, binds 16S rRNA, required for the assembly of 30S particles and may also be responsible for determining the conformation of the 16S rRNA at the A site. The sequence is that of Small ribosomal subunit protein uS14 from Chlorobium luteolum (strain DSM 273 / BCRC 81028 / 2530) (Pelodictyon luteolum).